The following is a 246-amino-acid chain: MPISFAAPIEVIVLDIEGTVCPISFVKTTLFPYFLEKLPSELSALTYPLKSTSNSPVEEICSQFPENVRVSSDSLLEYTTSLVNNDIKDPILKSLQGFIWKLGYENGELMAPVYEDAIEFVTDLSKTRKIYIYSSGSIKAQVLLFGHVKGANGSPVDMNRYLSGYYDITTAGFKQESGSYVSILKDIGYESKQSSVLFLSDNVREVDAAIQAGMNSLVVDRPGNAPLSEADKKSFSIIETFRDLKL.

The Mg(2+) site is built by Asp-15 and Glu-17. Residues 134–135 (SS) and Lys-174 contribute to the substrate site. Residue Asp-201 coordinates Mg(2+).

The protein belongs to the HAD-like hydrolase superfamily. MasA/MtnC family. Monomer. Mg(2+) is required as a cofactor.

Its subcellular location is the cytoplasm. The protein localises to the nucleus. It catalyses the reaction 5-methylsulfanyl-2,3-dioxopentyl phosphate + H2O = 1,2-dihydroxy-5-(methylsulfanyl)pent-1-en-3-one + phosphate. Its pathway is amino-acid biosynthesis; L-methionine biosynthesis via salvage pathway; L-methionine from S-methyl-5-thio-alpha-D-ribose 1-phosphate: step 3/6. It participates in amino-acid biosynthesis; L-methionine biosynthesis via salvage pathway; L-methionine from S-methyl-5-thio-alpha-D-ribose 1-phosphate: step 4/6. Bifunctional enzyme that catalyzes the enolization of 2,3-diketo-5-methylthiopentyl-1-phosphate (DK-MTP-1-P) into the intermediate 2-hydroxy-3-keto-5-methylthiopentenyl-1-phosphate (HK-MTPenyl-1-P), which is then dephosphorylated to form the acireductone 1,2-dihydroxy-3-keto-5-methylthiopentene (DHK-MTPene). This chain is Enolase-phosphatase E1, found in Debaryomyces hansenii (strain ATCC 36239 / CBS 767 / BCRC 21394 / JCM 1990 / NBRC 0083 / IGC 2968) (Yeast).